The sequence spans 5085 residues: Linear gramicidin synthase subunit D (5085 aa).

Carrier domains follow at residues 962 to 1037 (APRT…AAAG), 2023 to 2097 (SPST…EEKA), 3544 to 3619 (APRN…ELLT), and 4601 to 4676 (APQT…EEII). 4 positions are modified to O-(pantetheine 4'-phosphoryl)serine: serine 997, serine 2058, serine 3579, and serine 4636.

Belongs to the ATP-dependent AMP-binding enzyme family. Large multienzyme complex composed of 4 subunits; LgrA, LgrB, LgrC and LgrD. Requires pantetheine 4'-phosphate as cofactor.

Activates the 13th to the 16th (Trp, D-Leu, Trp and Gly) amino acids in linear gramicidin and catalyzes the formation of the peptide bond between them. This enzyme is also responsible for the epimerization of the 14th (D-Leu) amino acid. It also catalyzes the NAD(P)H-dependent reduction of the C-terminal glycine residue of the N-formylated 16-mer peptide, that binds to the peptidyl carrier domain of the terminal module of this protein, to form a peptidyl-aldehyde intermediate that is released from the enzyme complex. In Brevibacillus parabrevis, this protein is Linear gramicidin synthase subunit D (lgrD).